We begin with the raw amino-acid sequence, 147 residues long: Lysozyme C-1 (147 aa).

A signal peptide spans 1-18 (MKALLTLVFCLLPLAAQG). A C-type lysozyme domain is found at 19 to 147 (KVYSRCELAA…VSKWIRGCRL (129 aa)). Intrachain disulfides connect C24–C145, C48–C133, C82–C98, and C94–C112. Residues E53 and D70 contribute to the active site.

This sequence belongs to the glycosyl hydrolase 22 family.

Its subcellular location is the secreted. The enzyme catalyses Hydrolysis of (1-&gt;4)-beta-linkages between N-acetylmuramic acid and N-acetyl-D-glucosamine residues in a peptidoglycan and between N-acetyl-D-glucosamine residues in chitodextrins.. Functionally, lysozymes have primarily a bacteriolytic function; those in tissues and body fluids are associated with the monocyte-macrophage system and enhance the activity of immunoagents. The protein is Lysozyme C-1 of Anas platyrhynchos (Mallard).